Here is a 109-residue protein sequence, read N- to C-terminus: Larval cuticle protein 1 (109 aa).

The N-terminal stretch at 1 to 14 is a signal peptide; the sequence is MILVALALVALAVA. A Chitin-binding type R&amp;R domain is found at 34–107; that stretch reads EGSYQFGFET…AEGSSIPKPA (74 aa).

Functionally, component of the cuticle of the larva of Helicoverpa armigera. In Helicoverpa armigera (Cotton bollworm), this protein is Larval cuticle protein 1 (LCP1).